Here is a 357-residue protein sequence, read N- to C-terminus: Ketoreductase CTB6 (357 aa).

Y172 is a binding site for NADP(+).

Belongs to the NAD(P)-dependent epimerase/dehydratase family. Dihydroflavonol-4-reductase subfamily.

The protein operates within mycotoxin biosynthesis. Its function is as follows. Ketoreductase; part of the gene cluster that mediates the biosynthesis of cercosporin, a light-activated, non-host-selective toxin. The perylenequinone chromophore of cercosporin absorbs light energy to attain an electronically-activated triplet state and produces active oxygen species such as the hydroxyl radical, superoxide, hydrogen peroxide or singlet oxygen upon reaction with oxygen molecules. These reactive oxygen species cause damage to various cellular components including lipids, proteins and nucleic acids. The first step of cercosporin biosynthesis is performed by the polyketide synthase CTB1 which catalyzes the formation of nor-toralactone. The starter unit acyltransferase (SAT) domain of CTB1 initiates polyketide extension by the selective utilization of acetyl-CoA, which is elongated to the heptaketide in the beta-ketoacyl synthase (KS) domain by successive condensations with six malonyl units introduced by the malonyl acyltransferase (MAT) domain. The product template (PT) domain catalyzes C4-C9 and C2-C11 aldol cyclizations and dehydrations to a trihydroxynaphthalene, which is thought to be delivered to the thioesterase (TE) domain for product release. The bifunctional enzyme CTB3 then methylates nor-toralactone to toralactone before conducting an unusual oxidative aromatic ring opening. The O-methyltransferase CTB2 further methylates the nascent OH-6 of the CBT3 product, blocking further oxidation at this site before the reductase CTB6 reduces the 2-oxopropyl ketone at position C7, giving naphthalene. The FAD-dependent monooxygenase CTB5 in concert with the multicopper oxidase CTB12 are responsible for homodimerization of naphthalene with CTB7 installing the dioxepine moiety, finally producing cercosporin. The fasciclin domain-containing protein CTB11 might act with CTB5 and CTB12 whereas the roles of CTB9 and CTB10 have still to be elucidated. This is Ketoreductase CTB6 from Cercospora beticola (Sugarbeet leaf spot fungus).